The primary structure comprises 1225 residues: DNA-directed RNA polymerase subunit beta' (1225 aa).

Zn(2+) is bound by residues cysteine 60, cysteine 62, cysteine 75, and cysteine 78. 3 residues coordinate Mg(2+): aspartate 450, aspartate 452, and aspartate 454. Zn(2+) contacts are provided by cysteine 818, cysteine 892, cysteine 899, and cysteine 902.

The protein belongs to the RNA polymerase beta' chain family. In terms of assembly, the RNAP catalytic core consists of 2 alpha, 1 beta, 1 beta' and 1 omega subunit. When a sigma factor is associated with the core the holoenzyme is formed, which can initiate transcription. The cofactor is Mg(2+). Requires Zn(2+) as cofactor.

The enzyme catalyses RNA(n) + a ribonucleoside 5'-triphosphate = RNA(n+1) + diphosphate. In terms of biological role, DNA-dependent RNA polymerase catalyzes the transcription of DNA into RNA using the four ribonucleoside triphosphates as substrates. The chain is DNA-directed RNA polymerase subunit beta' from Streptococcus pneumoniae (strain ATCC 700669 / Spain 23F-1).